The primary structure comprises 477 residues: Protoporphyrinogen oxidase (477 aa).

FAD-binding positions include 9-14 (GGGISG), 34-35 (ES), W42, 57-60 (GPRG), V257, A449, and 454-456 (VAV).

Belongs to the protoporphyrinogen/coproporphyrinogen oxidase family. Protoporphyrinogen oxidase subfamily. In terms of assembly, monomer. Homodimer. FAD is required as a cofactor. In terms of tissue distribution, expressed in heart, brain, placenta, lung, liver, skeletal muscle, kidney and pancreas.

The protein localises to the mitochondrion inner membrane. The enzyme catalyses protoporphyrinogen IX + 3 O2 = protoporphyrin IX + 3 H2O2. It functions in the pathway porphyrin-containing compound metabolism; protoporphyrin-IX biosynthesis; protoporphyrin-IX from protoporphyrinogen-IX: step 1/1. Catalyzes the 6-electron oxidation of protoporphyrinogen-IX to form protoporphyrin-IX. The protein is Protoporphyrinogen oxidase (PPOX) of Homo sapiens (Human).